The chain runs to 423 residues: MAGRVKWVTDIEKSVLINNFEKRGWIQVTENEDWNFYWMSVQTIRNVFSVETGYRLSDDQIVNHFPNHYELTRKDLMVKNIKRYRKELEKEGSPLAEKDENGKYLYLDFVPVTYMLPADYNLFVEEFRKSPSSTWIMKPCGKAQGKGIFLINKLSQIKKWSRDSKTSSFVSQSTKEAYVISVYINNPLLIGGRKFDLRLYVLVSTYRPLRCYMYKLGFCRFCTVKYTPSTSELDNMFVHLTNVAIQKHGEDYNHIHGGKWTVNNLRLYLESTRGREVTSKLFDEIHWIIVQSLKAVAPVMNNDKHCFECYGYDIIIDDKLKPWLIEVNASPSLTSSTANDRILKYNLINDTLNIAVPNGEIPDCKWNKSPPKEVLGNYEILYDEELAQGDGAERELRNRPGQPVGPRAGRSRDSGRSVLTTWK.

Positions M1–N367 constitute a TTL domain. ATP-binding positions include K138, Q144–G145, S181–I184, and K194–D196. Q144 contacts a protein. Residue R220 participates in L-glutamate binding. An ATP-binding site is contributed by T241 to N242. K259 provides a ligand contact to L-glutamate. Mg(2+) contacts are provided by D313, E326, and N328. Residue K344 coordinates L-glutamate. The interval D390–K423 is disordered.

Belongs to the tubulin polyglutamylase family. In terms of assembly, part of the neuronal tubulin polyglutamylase complex which contains TPGS1, TPGS2, TTLL1, LRRC49 and NICN1. Interacts with PCM1, CSTPP1 and LRRC49. It depends on Mg(2+) as a cofactor. As to expression, highly expressed in brain, heart and kidney. Expressed in liver, lung, muscle, spleen, testis and trachea. In the brain, expressed in ependymal cilia, cortex, corpus callosum and striatum. Expressed in blastomere.

The protein localises to the cytoplasm. The protein resides in the cytoskeleton. Its subcellular location is the cilium basal body. It is found in the cilium axoneme. It localises to the cell projection. The protein localises to the cilium. The protein resides in the flagellum. The catalysed reaction is (L-glutamyl)(n)-gamma-L-glutamyl-L-glutamyl-[protein] + L-glutamate + ATP = (L-glutamyl)(n+1)-gamma-L-glutamyl-L-glutamyl-[protein] + ADP + phosphate + H(+). Catalytic subunit of a polyglutamylase complex which modifies tubulin, generating side chains of glutamate on the gamma-carboxyl group of specific glutamate residues within the C-terminal tail of tubulin. Probably involved in the side-chain elongation step of the polyglutamylation reaction rather than the initiation step. Modifies both alpha- and beta-tubulins with a preference for the alpha-tail. Unlike most polyglutamylases of the tubulin--tyrosine ligase family, only displays a catalytic activity when in complex with other proteins as it is most likely lacking domains important for autonomous activity. Part of the neuronal tubulin polyglutamylase complex. Mediates cilia and flagella polyglutamylation which is essential for their biogenesis and motility. Involved in respiratory motile cilia function through the regulation of beating asymmetry. Essential for sperm flagella biogenesis, motility and male fertility. Also mediates glutamylation of non-tubulin proteins. Involved in KLF4 glutamylation which impedes its ubiquitination, thereby leading to somatic cell reprogramming, pluripotency maintenance and embryogenesis. The sequence is that of Polyglutamylase complex subunit TTLL1 from Mus musculus (Mouse).